A 299-amino-acid chain; its full sequence is MQFKYLFTVIIPTYNCGQYIPKALDSLLLQGEYFTKTQVLIVNDGSTDNTKQIVEPYTQQYSNIEYLEKPNGNWGSVVNFVKQNQLAKGQYITVLDSDDYFLANAFQRVAAHFGHDMIVSAFYCYISPKRRRFLKPYFGKTGVIEQKTKLRTPHSQPLAKFYRHEIFHLLDPLKEKLFYQDCLLYHNAINKVQSVFYICEPLAVWYATRPGNSTTMPWNNADKFQAWCDLLKQMNLYGAGIVIYIYTMLPGFLKELKRQQLVLDLAKKPAYTWLPQPLAFLFGGLMALRTRKYIRYPKN.

It belongs to the glycosyltransferase 2 family.

This is an uncharacterized protein from Mycoplasma pneumoniae (strain ATCC 29342 / M129 / Subtype 1) (Mycoplasmoides pneumoniae).